We begin with the raw amino-acid sequence, 596 residues long: Probable tripeptidyl-peptidase SED2 (596 aa).

The N-terminal stretch at 1 to 16 (MRLLKFVCLLASVAAA) is a signal peptide. Positions 17 to 203 (KPTPGASHKV…LESMSVEEFA (187 aa)) are cleaved as a propeptide — removed in mature form. The Peptidase S53 domain occupies 210–596 (LVTTACLREL…NFQALTKVLP (387 aa)). N-linked (GlcNAc...) asparagine glycosylation occurs at Asn265. Catalysis depends on charge relay system residues Glu286 and Asp290. An N-linked (GlcNAc...) asparagine glycan is attached at Asn403. Ser501 acts as the Charge relay system in catalysis. Residues Asp543 and Ile544 each coordinate Ca(2+). Asn572 is a glycosylation site (N-linked (GlcNAc...) asparagine). Residues Gly576 and Asp578 each contribute to the Ca(2+) site.

It depends on Ca(2+) as a cofactor.

It is found in the secreted. The protein localises to the extracellular space. It catalyses the reaction Release of an N-terminal tripeptide from a polypeptide.. Its function is as follows. Secreted tripeptidyl-peptidase which degrades proteins at acidic pHs and is involved in virulence. This Trichophyton verrucosum (strain HKI 0517) protein is Probable tripeptidyl-peptidase SED2 (SED2).